The following is a 222-amino-acid chain: UPF0758 protein YicR (222 aa).

The MPN domain occupies Pro100–Ile222. Zn(2+) contacts are provided by His171, His173, and Asp184. A JAMM motif motif is present at residues His171–Asp184.

It belongs to the UPF0758 family. YicR subfamily.

This Escherichia coli O81 (strain ED1a) protein is UPF0758 protein YicR.